The chain runs to 49 residues: Beta-toxin Rc1 (49 aa).

Intrachain disulfides connect C15/C31, C22/C40, and C26/C42.

The protein belongs to the long (4 C-C) scorpion toxin superfamily. Sodium channel inhibitor family. Beta subfamily. As to expression, expressed by the venom gland.

The protein localises to the secreted. Its function is as follows. Beta toxins bind voltage-independently at site-4 of sodium channels (Nav) and shift the voltage of activation toward more negative potentials thereby affecting sodium channel activation and promoting spontaneous and repetitive firing. This toxin acts on X.laevis Nav1.6/SCN8A and insect BgNav1 channels, and also displays a small but significant effect on X.laevis Nav1.4/SCN4A channels. In mice induces nociception (licking and lifting behaviors) during the first 15 minutes after injection, and increases the release of TNF-alpha in J774.1 cells. The chain is Beta-toxin Rc1 from Rhopalurus crassicauda (Scorpion).